The following is a 126-amino-acid chain: Small ribosomal subunit protein uS13 (126 aa).

Positions 92-126 (HRRGLPVRGQRTKTNARTRKGPKKTVAGKKKATRK) are disordered.

It belongs to the universal ribosomal protein uS13 family. Part of the 30S ribosomal subunit. Forms a loose heterodimer with protein S19. Forms two bridges to the 50S subunit in the 70S ribosome.

Functionally, located at the top of the head of the 30S subunit, it contacts several helices of the 16S rRNA. In the 70S ribosome it contacts the 23S rRNA (bridge B1a) and protein L5 of the 50S subunit (bridge B1b), connecting the 2 subunits; these bridges are implicated in subunit movement. Contacts the tRNAs in the A and P-sites. This chain is Small ribosomal subunit protein uS13, found in Deinococcus deserti (strain DSM 17065 / CIP 109153 / LMG 22923 / VCD115).